The primary structure comprises 205 residues: Protein phosphatase inhibitor 2 (205 aa).

Disordered stretches follow at residues 1 to 46 (MAAS…KSQK) and 64 to 205 (GLMK…SQSS). A2 is subject to N-acetylalanine. Required for binding PPP1CC regions lie at residues 12–17 (KGILKN) and 43–55 (KSQK…ILAT). Residues 17–26 (NKTSSTSSRV) are compositionally biased toward polar residues. Residues 35-46 (SVDEELSKKSQK) show a composition bias toward basic and acidic residues. Residue S44 is modified to Phosphoserine; by ATM. T73 carries the post-translational modification Phosphothreonine; by GSK3. The span at 80-91 (GDDDDAYSDTET) shows a compositional bias: acidic residues. S87 is subject to Phosphoserine. Residues T89, T92, and T96 each carry the phosphothreonine modification. A compositionally biased stretch (basic and acidic residues) spans 110 to 120 (SEPKYRIREQE). A phosphoserine mark is found at S121, S122, S127, and S130. The span at 121–130 (SSGEEDSDLS) shows a compositional bias: acidic residues. Residues 131–143 (PEEREKKRQFEMK) show a composition bias toward basic and acidic residues. Residues 147-150 (HYNE) form a required for binding PPP1CC catalytic center, displacing metal ions and inhibition of PPP1CC catalytic activity region. Residues 167 to 179 (DDEEDEEMSETAD) show a composition bias toward acidic residues. Polar residues predominate over residues 182-205 (SMNTEESNQGSTPSDQRQNKSQSS).

Belongs to the protein phosphatase inhibitor 2 family. In terms of assembly, heterodimer with PP1. In terms of processing, phosphorylation on Ser-44 by ATM activates PP1 by dissociating the PP1-PPP1R2 complex. Phosphorylation on Thr-73 by GSK3 activates PP1 by dissociating the PP1-PPP1R2 complex.

In terms of biological role, inhibitor of protein-phosphatase 1. The chain is Protein phosphatase inhibitor 2 (PPP1R2) from Oryctolagus cuniculus (Rabbit).